The following is a 2616-amino-acid chain: Serine protease ndl (2616 aa).

The N-terminal stretch at 1–43 (MNYNMDEMEATRLLRHPRRWWSIGFGKRIVAISILVIIVLLFS) is a signal peptide. Residues serine 215 and serine 220 each carry the phosphoserine modification. One copy of the WIID 1 repeat lies at 261-269 (ISWIIDGHD). The N-linked (GlcNAc...) asparagine glycan is linked to asparagine 291. The stretch at 320-328 (ISWILDHFD) is one WIID 2 repeat. Asparagine 347 is a glycosylation site (N-linked (GlcNAc...) asparagine). The segment at 352-375 (SASSEPIVDTENTNSDHVPTTENG) is disordered. N-linked (GlcNAc...) asparagine glycosylation occurs at asparagine 379. A WIID 3 repeat occupies 399–407 (FDWILDGEE). Asparagine 417 is a glycosylation site (N-linked (GlcNAc...) asparagine). WIID repeat units follow at residues 446 to 454 (FDWIIDGRE) and 477 to 485 (FDWIIDGEE). 2 N-linked (GlcNAc...) asparagine glycosylation sites follow: asparagine 492 and asparagine 515. One copy of the WIID 6 repeat lies at 528–536 (FDWIIDGGE). Positions 537–547 (SSGEVSTSSTS) are enriched in low complexity. Positions 537-574 (SSGEVSTSSTSQPKLTTREAISNPESPRSSHPLDNPTS) are disordered. Polar residues predominate over residues 548–565 (QPKLTTREAISNPESPRS). 2 positions are modified to phosphoserine: serine 574 and serine 581. Asparagine 598 carries an N-linked (GlcNAc...) asparagine glycan. An O-linked (Xyl...) (glycosaminoglycan) serine glycan is attached at serine 794. Residues 798–817 (GQGANIFSKNASPQKPTNGQ) are disordered. Positions 804–817 (FSKNASPQKPTNGQ) are enriched in polar residues. The N-linked (GlcNAc...) asparagine glycan is linked to asparagine 827. A glycan (O-linked (Xyl...) (glycosaminoglycan) serine) is linked at serine 829. An N-linked (GlcNAc...) asparagine glycan is attached at asparagine 861. 2 LDL-receptor class A domains span residues 889 to 929 (SRCP…ACTC) and 955 to 1006 (FGCE…QCSM). Disulfide bonds link cysteine 891-cysteine 905, cysteine 899-cysteine 918, and cysteine 912-cysteine 927. Residues 929 to 956 (CADRVDEERLCDGYEDCPMGEDELGCFG) enclose the LDL-receptor class A 2; truncated domain. 3 cysteine pairs are disulfide-bonded: cysteine 957-cysteine 982, cysteine 964-cysteine 995, and cysteine 989-cysteine 1004. N-linked (GlcNAc...) asparagine glycosylation occurs at asparagine 975. Residues 1031 to 1033 (RGD) carry the Cell attachment site motif. Asparagine 1064 is a glycosylation site (N-linked (GlcNAc...) asparagine). Residues serine 1134 and serine 1136 each carry the phosphoserine modification. Residues 1145–1383 (IVGGSYTSAL…YLDWLEMATT (239 aa)) form the Peptidase S1 1 domain. Cysteine 1170 and cysteine 1186 are joined by a disulfide. Catalysis depends on charge relay system residues histidine 1185 and aspartate 1233. 6 cysteine pairs are disulfide-bonded: cysteine 1276–cysteine 1338, cysteine 1305–cysteine 1317, cysteine 1328–cysteine 1359, cysteine 1396–cysteine 1408, cysteine 1401–cysteine 1421, and cysteine 1415–cysteine 1430. Serine 1332 serves as the catalytic Charge relay system. An LDL-receptor class A 4 domain is found at 1394–1432 (QLCPGFICVWGGKRCIAKRQRCDRNVDCLGGEDEVGCTY). N-linked (GlcNAc...) asparagine glycosylation occurs at asparagine 1445. 2 disordered regions span residues 1530 to 1557 (FTVS…PSTN) and 1683 to 1704 (PTTT…HSEK). 2 stretches are compositionally biased toward low complexity: residues 1537–1557 (TSPS…PSTN) and 1683–1700 (PTTT…SSST). The LDL-receptor class A 5; truncated domain occupies 1713-1743 (FVCKKMSQIVDIMMRCDRKVDCEDGTDELDC). 6 cysteine pairs are disulfide-bonded: cysteine 1728–cysteine 1745, cysteine 1734–cysteine 1764, cysteine 1758–cysteine 1773, cysteine 1776–cysteine 1789, cysteine 1783–cysteine 1802, and cysteine 1796–cysteine 1811. The 31-residue stretch at 1745–1775 (CKDYLKGSLKGLICDGKADCEDLTDEQNCVE) folds into the LDL-receptor class A 6; truncated domain. An LDL-receptor class A 7 domain is found at 1774–1813 (VECQSNEFRCPLSKTCLPLSSRCDNKVDCKFKEDEKDCFA). N-linked (GlcNAc...) asparagine glycans are attached at residues asparagine 1878, asparagine 1956, and asparagine 2023. Residues 2027 to 2301 (LVNEQLHEAI…LQDIIDKPSC (275 aa)) form the Peptidase S1 2 domain. A disulfide bridge connects residues cysteine 2055 and cysteine 2071. N-linked (GlcNAc...) asparagine glycosylation is found at asparagine 2144, asparagine 2173, asparagine 2197, asparagine 2237, and asparagine 2269. A disulfide bond links cysteine 2177 and cysteine 2230. LDL-receptor class A domains are found at residues 2308-2346 (PDCS…KCRQ), 2349-2389 (QQCA…ICSC), and 2419-2459 (CNCT…YCFG). 6 disulfides stabilise this stretch: cysteine 2310–cysteine 2320, cysteine 2315–cysteine 2333, cysteine 2327–cysteine 2344, cysteine 2351–cysteine 2364, cysteine 2358–cysteine 2377, and cysteine 2371–cysteine 2387. One can recognise an LDL-receptor class A 10; truncated domain in the interval 2387–2419 (CSCFTYLQATDPSKICDGKRNCWDKSDESSVLC). Asparagine 2420 is a glycosylation site (N-linked (GlcNAc...) asparagine). 3 disulfides stabilise this stretch: cysteine 2421/cysteine 2435, cysteine 2428/cysteine 2448, and cysteine 2442/cysteine 2457. N-linked (GlcNAc...) asparagine glycosylation is found at asparagine 2556 and asparagine 2601.

Belongs to the peptidase S1 family. Post-translationally, requires cleavage for activation (presumably). Follicle.

It is found in the secreted. Its subcellular location is the extracellular space. The protein localises to the extracellular matrix. Functionally, component of the extracellular signaling pathway that establishes the dorsal-ventral pathway of the embryo. A protease cascade involving ndl, gd, snk and ea results in activation of the spz Toll receptor ligand; acts upstream of gd, snk and ea and is required for proteolytic processing of gd. Activation of ea requires activation of the ndl-gd-snk protease cascade and sulfation of a vitelline membrane component by pip. Localized activation of the Toll receptor in the ventral region of the embryo defines cell identities along the dorsal-ventral continuum. The protein is Serine protease ndl of Drosophila melanogaster (Fruit fly).